A 1259-amino-acid polypeptide reads, in one-letter code: Lysine-specific demethylase 2B (1259 aa).

In terms of domain architecture, JmjC spans 147–315 (FSHTKLERVV…MQLRVFEIED (169 aa)). Thr208 is a binding site for substrate. Fe cation is bound by residues His211 and Asp213. Lys228 is a binding site for substrate. His283 is a binding site for Fe cation. Residues 388 to 402 (EEKGNLVEKPSKQSG) show a composition bias toward basic and acidic residues. Disordered stretches follow at residues 388–463 (EEKG…ATDM) and 536–562 (KPSKNRAVGRPKGKIASSPAVKLSANR). The segment covering 403-413 (DESSTTNSTHS) has biased composition (polar residues). A compositionally biased stretch (basic and acidic residues) spans 414-423 (NGKDAAEKKQ). Polar residues predominate over residues 426 to 437 (TLMQQLKRTLSN). The span at 536–548 (KPSKNRAVGRPKG) shows a compositional bias: basic residues. The CXXC-type zinc-finger motif lies at 567–613 (ARRRRTRCRKCEACLRTECGECHFCKDMKKFGGPGRMKQSCIMRQCI). Cys574, Cys577, Cys580, Cys585, Cys588, Cys591, Cys607, Cys612, Cys623, Cys626, Cys649, Cys652, His657, Cys660, Cys680, and Cys683 together coordinate Zn(2+). The PHD-type zinc-finger motif lies at 620–686 (TAVCLVCGEA…CWECPKCNHA (67 aa)). Basic and acidic residues-rich tracts occupy residues 729–763 (KKKVEREETPKQIPEEQPKKKPTEGIIKKKPEDGH) and 771–790 (EKPPDPSVRKRLKLVKEEKL). A disordered region spans residues 729-958 (KKKVEREETP…PPPSLSPPKC (230 aa)). Residues 835-848 (SRSSSPTAGPSTEG) are compositionally biased toward polar residues. Residues 854–863 (KKKIRRKRRV) show a composition bias toward basic residues. A compositionally biased stretch (basic and acidic residues) spans 864–877 (SNKELSKELSKELN). A coiled-coil region spans residues 864 to 891 (SNKELSKELSKELNQEIQKTESSLASEN). Positions 878-889 (QEIQKTESSLAS) are enriched in polar residues. A compositionally biased stretch (basic and acidic residues) spans 890–908 (ENHHPIKSEPESDNEESKK). Positions 985 to 1030 (AHVMQREVWMAIFSYLSHRDLCICMRICRTWNRWCCDKRLWTQIDL) constitute an F-box domain. LRR repeat units lie at residues 1056–1081 (WTNISKKQLSWLINRLPALRDLNLSG), 1082–1105 (CSWIAVSALCSSCCPLLRTLNVQW), 1145–1170 (GLDITDASLRLMIRHMPLLAKLDLSY), 1171–1200 (CNHVTDQSINLLTAVGTSTRDTLLEMNLSD), and 1201–1225 (CNNVTDQCLTFFKRCGNICLIDLRF).

It belongs to the JHDM1 histone demethylase family. Fe(2+) is required as a cofactor.

Its subcellular location is the nucleus. It is found in the nucleolus. The protein localises to the chromosome. It carries out the reaction N(6),N(6)-dimethyl-L-lysyl(36)-[histone H3] + 2 2-oxoglutarate + 2 O2 = L-lysyl(36)-[histone H3] + 2 formaldehyde + 2 succinate + 2 CO2. Its activity is regulated as follows. Histone demethylase activity is inhibited by fumarate. Functionally, histone demethylase that demethylates 'Lys-4' and 'Lys-36' of histone H3, thereby playing a central role in histone code. Preferentially demethylates trimethylated H3 'Lys-4' and dimethylated H3 'Lys-36' residue while it has weak or no activity for mono- and tri-methylated H3 'Lys-36'. Preferentially binds the transcribed region of ribosomal RNA and represses the transcription of ribosomal RNA genes which inhibits cell growth and proliferation. The polypeptide is Lysine-specific demethylase 2B (kdm2b) (Xenopus laevis (African clawed frog)).